The sequence spans 380 residues: UDP-N-acetylglucosamine 2-epimerase (380 aa).

The protein belongs to the UDP-N-acetylglucosamine 2-epimerase family.

Its subcellular location is the cytoplasm. It carries out the reaction UDP-N-acetyl-alpha-D-glucosamine = UDP-N-acetyl-alpha-D-mannosamine. The protein operates within cell wall biogenesis; poly(glycerol phosphate) teichoic acid biosynthesis. Its function is as follows. Catalyzes the conversion of UDP-N-acetylglucosamine into UDP-N-acetylmannosamine, a precursor of the teichoic acid linkage unit. In Bacillus subtilis (strain 168), this protein is UDP-N-acetylglucosamine 2-epimerase (mnaA).